Here is a 359-residue protein sequence, read N- to C-terminus: (2E,6E)-farnesyl diphosphate synthase (359 aa).

The segment at 1-21 is disordered; that stretch reads MRGTDEKYGLPPQPDSDRMTR. The isopentenyl diphosphate site is built by Lys-73, Arg-76, and His-105. Positions 112 and 116 each coordinate Mg(2+). The short motif at 112–116 is the DDXXD motif element; it reads DDLMD. Arg-121 contacts (2E)-geranyl diphosphate. Arg-122 is an isopentenyl diphosphate binding site. (2E)-geranyl diphosphate-binding residues include Lys-201, Thr-202, and Gln-239. The DDXXD motif signature appears at 242-246; the sequence is DDLLG. (2E)-geranyl diphosphate contacts are provided by Lys-256 and Lys-266.

It belongs to the FPP/GGPP synthase family. It depends on Mg(2+) as a cofactor.

It localises to the cytoplasm. The catalysed reaction is isopentenyl diphosphate + (2E)-geranyl diphosphate = (2E,6E)-farnesyl diphosphate + diphosphate. The protein operates within isoprenoid biosynthesis; farnesyl diphosphate biosynthesis; farnesyl diphosphate from geranyl diphosphate and isopentenyl diphosphate. Catalyzes the condensation of isopentenyl pyrophosphate (IPP) with geranyl diphosphate (GPP) to yield (2E,6E)-farnesyl diphosphate (E,E-FPP). May be used for squalene and possibly sterol biosynthesis. This Mycobacterium bovis (strain ATCC BAA-935 / AF2122/97) protein is (2E,6E)-farnesyl diphosphate synthase.